The primary structure comprises 406 residues: MKRAFILVLDSFGIGATADAQAFGDVGSDTLGHIADQCAQGLADNAERKGALQLPNLSKLGLAMAHKESTGRFAPGLDERADIIGAYAHAAELSSGKDTPSGHWEIAGVPVLFEWGYFSDKQNSFPKELTDRILARAGLDGFLGNCHASGTQVLDDLGEEHMRTGKPIFYTSADSVFQIACHEETFGLARLLELCQIAREELADYNIGRVIARPFVGPGKGQFARTGNRRDLSVEPPSATVLQKLVEEKQGRVVSIGKIADIYAYCGITDKVKATGIPDLFEATLEQIKQAGDNTIVFTNFVDFDSAYGHRRDVAGYAAALEYFDKRLPEVLALMQEDDILILTADHGCDPTWPGTDHTREHIPVLVYGKKVAPGSLGRRDTFADIGQTLASYFGTSPMDYGKNFL.

Residues aspartate 10, aspartate 305, histidine 310, aspartate 346, histidine 347, and histidine 358 each contribute to the Mn(2+) site.

The protein belongs to the phosphopentomutase family. Requires Mn(2+) as cofactor.

Its subcellular location is the cytoplasm. It catalyses the reaction 2-deoxy-alpha-D-ribose 1-phosphate = 2-deoxy-D-ribose 5-phosphate. The catalysed reaction is alpha-D-ribose 1-phosphate = D-ribose 5-phosphate. The protein operates within carbohydrate degradation; 2-deoxy-D-ribose 1-phosphate degradation; D-glyceraldehyde 3-phosphate and acetaldehyde from 2-deoxy-alpha-D-ribose 1-phosphate: step 1/2. Its function is as follows. Isomerase that catalyzes the conversion of deoxy-ribose 1-phosphate (dRib-1-P) and ribose 1-phosphate (Rib-1-P) to deoxy-ribose 5-phosphate (dRib-5-P) and ribose 5-phosphate (Rib-5-P), respectively. This Vibrio cholerae serotype O1 (strain ATCC 39541 / Classical Ogawa 395 / O395) protein is Phosphopentomutase.